A 213-amino-acid polypeptide reads, in one-letter code: Thymidylate kinase (213 aa).

10-17 (GLEGAGKT) is an ATP binding site.

This sequence belongs to the thymidylate kinase family.

The catalysed reaction is dTMP + ATP = dTDP + ADP. Phosphorylation of dTMP to form dTDP in both de novo and salvage pathways of dTTP synthesis. This Salmonella choleraesuis (strain SC-B67) protein is Thymidylate kinase.